Here is a 407-residue protein sequence, read N- to C-terminus: FK506-binding protein 3 (407 aa).

Disordered regions lie at residues 46–136 (RIEG…DDEG), 191–223 (DEDE…EDEV), and 236–297 (QDDE…PKLV). 2 stretches are compositionally biased toward acidic residues: residues 65-88 (NFDD…EVSA) and 103-136 (DGLD…DDEG). The span at 236-252 (QDDEDDEDDEDEEEEPV) shows a compositional bias: acidic residues. Positions 253-272 (VEPKKILKRAAEEKKQEKAA) are enriched in basic and acidic residues. In terms of domain architecture, PPIase FKBP-type spans 321–407 (GSKVGVRYVG…TFDVKVVNIK (87 aa)).

The protein belongs to the FKBP-type PPIase family. FKBP3/4 subfamily.

The protein localises to the nucleus. The protein resides in the nucleolus. It catalyses the reaction [protein]-peptidylproline (omega=180) = [protein]-peptidylproline (omega=0). With respect to regulation, inhibited by both FK506 and rapamycin. Its function is as follows. PPIases accelerate the folding of proteins. It catalyzes the cis-trans isomerization of proline imidic peptide bonds in oligopeptides. In Yarrowia lipolytica (strain CLIB 122 / E 150) (Yeast), this protein is FK506-binding protein 3 (FPR3).